Consider the following 460-residue polypeptide: Putative protein p41 (460 aa).

Residues 14–186 form the Helicase ATP-binding domain; it reads INHLLDIKRS…WGQAWFVDQG (173 aa).

The sequence is that of Putative protein p41 (41) from Escherichia coli (Bacteriophage APSE-1).